The following is a 397-amino-acid chain: Succinate--CoA ligase [ADP-forming] subunit beta (397 aa).

An ATP-grasp domain is found at 9-254 (KALLKGYGAP…ETEEDAKEIE (246 aa)). ATP is bound by residues K46, 53 to 55 (GRG), E109, A112, and E117. Residues N209 and D223 each coordinate Mg(2+). Substrate is bound by residues N274 and 331–333 (GIM).

This sequence belongs to the succinate/malate CoA ligase beta subunit family. In terms of assembly, heterotetramer of two alpha and two beta subunits. Requires Mg(2+) as cofactor.

It carries out the reaction succinate + ATP + CoA = succinyl-CoA + ADP + phosphate. The catalysed reaction is GTP + succinate + CoA = succinyl-CoA + GDP + phosphate. It participates in carbohydrate metabolism; tricarboxylic acid cycle; succinate from succinyl-CoA (ligase route): step 1/1. Its function is as follows. Succinyl-CoA synthetase functions in the citric acid cycle (TCA), coupling the hydrolysis of succinyl-CoA to the synthesis of either ATP or GTP and thus represents the only step of substrate-level phosphorylation in the TCA. The beta subunit provides nucleotide specificity of the enzyme and binds the substrate succinate, while the binding sites for coenzyme A and phosphate are found in the alpha subunit. This chain is Succinate--CoA ligase [ADP-forming] subunit beta, found in Rhizobium leguminosarum bv. trifolii (strain WSM2304).